Consider the following 695-residue polypeptide: Eukaryotic translation initiation factor 3 subunit B (695 aa).

Over residues 1 to 10 (MAKKKGDEKA) the composition is skewed to basic and acidic residues. Residues 1–43 (MAKKKGDEKANPAPQSDNEEQNFEEEPDFDDPEDFVEIPEEEL) form a disordered region. The segment covering 17 to 43 (DNEEQNFEEEPDFDDPEDFVEIPEEEL) has biased composition (acidic residues). The 85-residue stretch at 60–144 (NVVVVDGCPQ…HTFLVNLFTD (85 aa)) folds into the RRM domain. WD repeat units lie at residues 164-205 (KVQS…PLLL), 295-335 (PPDE…LLDK), 338-373 (IKIP…TLLE), and 444-486 (EIKE…APTL).

It belongs to the eIF-3 subunit B family. In terms of assembly, component of the eukaryotic translation initiation factor 3 (eIF-3) complex.

The protein localises to the cytoplasm. RNA-binding component of the eukaryotic translation initiation factor 3 (eIF-3) complex, which is involved in protein synthesis of a specialized repertoire of mRNAs and, together with other initiation factors, stimulates binding of mRNA and methionyl-tRNAi to the 40S ribosome. The eIF-3 complex specifically targets and initiates translation of a subset of mRNAs involved in cell proliferation. This Bombyx mori (Silk moth) protein is Eukaryotic translation initiation factor 3 subunit B.